Consider the following 246-residue polypeptide: 5-oxoprolinase subunit A (246 aa).

The protein belongs to the LamB/PxpA family. In terms of assembly, forms a complex composed of PxpA, PxpB and PxpC.

It catalyses the reaction 5-oxo-L-proline + ATP + 2 H2O = L-glutamate + ADP + phosphate + H(+). Catalyzes the cleavage of 5-oxoproline to form L-glutamate coupled to the hydrolysis of ATP to ADP and inorganic phosphate. The protein is 5-oxoprolinase subunit A of Cupriavidus metallidurans (strain ATCC 43123 / DSM 2839 / NBRC 102507 / CH34) (Ralstonia metallidurans).